The primary structure comprises 394 residues: Tubulin-like protein CetZ5 (394 aa).

GTP-binding positions include 10–14, 110–112, Glu142, Asn169, and Asn187; these read QAGGN and GTG.

It belongs to the CetZ family.

Its subcellular location is the cytoplasm. Its function is as follows. Involved in cell shape control. This is Tubulin-like protein CetZ5 from Haloferax volcanii (strain ATCC 29605 / DSM 3757 / JCM 8879 / NBRC 14742 / NCIMB 2012 / VKM B-1768 / DS2) (Halobacterium volcanii).